Here is a 698-residue protein sequence, read N- to C-terminus: tRNA (guanine(37)-N(1))-methyltransferase (698 aa).

The interval 233-254 is disordered; that stretch reads DSTAHDSVQRNEGKTPKGPLDG. Over residues 234-247 the composition is skewed to basic and acidic residues; it reads STAHDSVQRNEGKT. Residues Arg394, 432-433, and 459-460 each bind S-adenosyl-L-methionine; these read DI and DA. 2 disordered regions span residues 500-522 and 534-582; these read PDQN…GHVD and KKKL…DAPR. 3 stretches are compositionally biased toward basic and acidic residues: residues 513–522, 539–550, and 569–582; these read RESDRVGHVD, HADTNDPLEERP, and TNND…DAPR. Asn603 serves as a coordination point for S-adenosyl-L-methionine.

Belongs to the class I-like SAM-binding methyltransferase superfamily. TRM5/TYW2 family. Monomer.

The protein resides in the mitochondrion matrix. It is found in the nucleus. It localises to the cytoplasm. It carries out the reaction guanosine(37) in tRNA + S-adenosyl-L-methionine = N(1)-methylguanosine(37) in tRNA + S-adenosyl-L-homocysteine + H(+). Specifically methylates the N1 position of guanosine-37 in various cytoplasmic and mitochondrial tRNAs. Methylation is not dependent on the nature of the nucleoside 5' of the target nucleoside. This is the first step in the biosynthesis of wybutosine (yW), a modified base adjacent to the anticodon of tRNAs and required for accurate decoding. This chain is tRNA (guanine(37)-N(1))-methyltransferase, found in Plasmodium knowlesi (strain H).